The following is a 343-amino-acid chain: Low conductance mechanosensitive channel YnaI (343 aa).

At 1-9 (MIAELFTNN) the chain is on the periplasmic side. Residues 10–30 (ALNLVIIFGSCAALILMSFWF) traverse the membrane as a helical segment. The Cytoplasmic segment spans residues 31 to 40 (RRGNRKRKGF). A helical membrane pass occupies residues 41-61 (LFHAVQFLIYTIIISAVGSII). Over 62–77 (NYVIENYKLKFITPGV) the chain is Periplasmic. The chain crosses the membrane as a helical span at residues 78–98 (IDFICTSLIAVILTIKLFLLI). The Cytoplasmic segment spans residues 99–125 (NQFEKQQIKKGRDITSARIMSRIIKIT). Residues 126-146 (IIVVLVLLYGEHFGMSLSGLL) traverse the membrane as a helical segment. A topological domain (periplasmic) is located at residue Thr-147. Residues 148–168 (FGGIGGLAVGMAGKDILSNFF) form a helical membrane-spanning segment. The Cytoplasmic portion of the chain corresponds to 169–343 (SGIMLYFDRP…DNITPPEQGR (175 aa)).

It belongs to the MscS (TC 1.A.23) family. In terms of assembly, homoheptamer.

It is found in the cell inner membrane. Mechanosensitive channel that protects cells against hypoosmotic stress when highly overexpressed. This chain is Low conductance mechanosensitive channel YnaI (ynaI), found in Escherichia coli (strain K12).